We begin with the raw amino-acid sequence, 310 residues long: ADP-L-glycero-D-manno-heptose-6-epimerase (310 aa).

NADP(+) is bound by residues 10-11 (FI), 31-32 (DN), lysine 38, lysine 53, 75-79 (EGACS), and asparagine 92. The Proton acceptor role is filled by tyrosine 140. An NADP(+)-binding site is contributed by lysine 144. Asparagine 169 provides a ligand contact to substrate. 2 residues coordinate NADP(+): valine 170 and lysine 178. Catalysis depends on lysine 178, which acts as the Proton acceptor. Substrate is bound by residues serine 180, histidine 187, 201 to 204 (FEGS), arginine 209, and tyrosine 272.

Belongs to the NAD(P)-dependent epimerase/dehydratase family. HldD subfamily. Homopentamer. NADP(+) serves as cofactor.

It catalyses the reaction ADP-D-glycero-beta-D-manno-heptose = ADP-L-glycero-beta-D-manno-heptose. It participates in nucleotide-sugar biosynthesis; ADP-L-glycero-beta-D-manno-heptose biosynthesis; ADP-L-glycero-beta-D-manno-heptose from D-glycero-beta-D-manno-heptose 7-phosphate: step 4/4. Functionally, catalyzes the interconversion between ADP-D-glycero-beta-D-manno-heptose and ADP-L-glycero-beta-D-manno-heptose via an epimerization at carbon 6 of the heptose. The chain is ADP-L-glycero-D-manno-heptose-6-epimerase from Citrobacter koseri (strain ATCC BAA-895 / CDC 4225-83 / SGSC4696).